Here is a 253-residue protein sequence, read N- to C-terminus: Leucyl/phenylalanyl-tRNA--protein transferase (253 aa).

This sequence belongs to the L/F-transferase family.

The protein resides in the cytoplasm. The enzyme catalyses N-terminal L-lysyl-[protein] + L-leucyl-tRNA(Leu) = N-terminal L-leucyl-L-lysyl-[protein] + tRNA(Leu) + H(+). The catalysed reaction is N-terminal L-arginyl-[protein] + L-leucyl-tRNA(Leu) = N-terminal L-leucyl-L-arginyl-[protein] + tRNA(Leu) + H(+). It carries out the reaction L-phenylalanyl-tRNA(Phe) + an N-terminal L-alpha-aminoacyl-[protein] = an N-terminal L-phenylalanyl-L-alpha-aminoacyl-[protein] + tRNA(Phe). In terms of biological role, functions in the N-end rule pathway of protein degradation where it conjugates Leu, Phe and, less efficiently, Met from aminoacyl-tRNAs to the N-termini of proteins containing an N-terminal arginine or lysine. This is Leucyl/phenylalanyl-tRNA--protein transferase from Bordetella petrii (strain ATCC BAA-461 / DSM 12804 / CCUG 43448).